The primary structure comprises 334 residues: Ornithine carbamoyltransferase (334 aa).

Carbamoyl phosphate is bound by residues 57–60, Gln-84, Arg-108, and 135–138; these read STRT and HPTQ. Residues Asn-169, Asp-233, and 237-238 each bind L-ornithine; that span reads SM. Residues 275–276 and Arg-320 each bind carbamoyl phosphate; that span reads CL.

It belongs to the aspartate/ornithine carbamoyltransferase superfamily. OTCase family.

It localises to the cytoplasm. The enzyme catalyses carbamoyl phosphate + L-ornithine = L-citrulline + phosphate + H(+). It participates in amino-acid biosynthesis; L-arginine biosynthesis; L-arginine from L-ornithine and carbamoyl phosphate: step 1/3. In terms of biological role, reversibly catalyzes the transfer of the carbamoyl group from carbamoyl phosphate (CP) to the N(epsilon) atom of ornithine (ORN) to produce L-citrulline. The chain is Ornithine carbamoyltransferase from Aeromonas salmonicida (strain A449).